Here is a 400-residue protein sequence, read N- to C-terminus: Cytochrome b (400 aa).

Residues L47 to M67 form a helical membrane-spanning segment. The heme b site is built by H97 and H111. 8 helical membrane-spanning segments follow: residues A98 to Y118, I131 to W151, F166 to V186, F194 to V214, F247 to Y267, L306 to D326, I341 to A361, and I368 to G388. Heme b-binding residues include H198 and H212.

It belongs to the cytochrome b family. As to quaternary structure, the main subunits of complex b-c1 are: cytochrome b, cytochrome c1 and the Rieske protein. Heme b serves as cofactor.

It localises to the cell membrane. Component of the ubiquinol-cytochrome c reductase complex (complex III or cytochrome b-c1 complex), which is a respiratory chain that generates an electrochemical potential coupled to ATP synthesis. This Rickettsia bellii (strain RML369-C) protein is Cytochrome b (petB).